A 169-amino-acid chain; its full sequence is 6,7-dimethyl-8-ribityllumazine synthase (169 aa).

5-amino-6-(D-ribitylamino)uracil-binding positions include F24, 58–60 (ALE), and 82–84 (AVV). 87–88 (ET) lines the (2S)-2-hydroxy-3-oxobutyl phosphate pocket. H90 acts as the Proton donor in catalysis. N115 provides a ligand contact to 5-amino-6-(D-ribitylamino)uracil. R129 contributes to the (2S)-2-hydroxy-3-oxobutyl phosphate binding site.

This sequence belongs to the DMRL synthase family.

The enzyme catalyses (2S)-2-hydroxy-3-oxobutyl phosphate + 5-amino-6-(D-ribitylamino)uracil = 6,7-dimethyl-8-(1-D-ribityl)lumazine + phosphate + 2 H2O + H(+). The protein operates within cofactor biosynthesis; riboflavin biosynthesis; riboflavin from 2-hydroxy-3-oxobutyl phosphate and 5-amino-6-(D-ribitylamino)uracil: step 1/2. Its function is as follows. Catalyzes the formation of 6,7-dimethyl-8-ribityllumazine by condensation of 5-amino-6-(D-ribitylamino)uracil with 3,4-dihydroxy-2-butanone 4-phosphate. This is the penultimate step in the biosynthesis of riboflavin. This Cupriavidus metallidurans (strain ATCC 43123 / DSM 2839 / NBRC 102507 / CH34) (Ralstonia metallidurans) protein is 6,7-dimethyl-8-ribityllumazine synthase.